Consider the following 48-residue polypeptide: Small polypeptide DEVIL 22 (48 aa).

The chain crosses the membrane as a helical span at residues 7–23 (KLNKGHAFTSKCASLVK). The tract at residues 13–44 (AFTSKCASLVKEQRARLYILRRCATMLCCWYI) is required for DVL/RTFL small polypeptide activity.

Belongs to the DVL/RTFL small polypeptides family.

The protein resides in the cell membrane. Functionally, small polypeptide acting as a regulatory molecule which coordinates cellular responses required for differentiation, growth and development, probably by restricting polar cell proliferation in lateral organs and coordinating socket cell recruitment and differentiation at trichome sites. This chain is Small polypeptide DEVIL 22, found in Arabidopsis thaliana (Mouse-ear cress).